We begin with the raw amino-acid sequence, 256 residues long: Triosephosphate isomerase (256 aa).

N9–K11 serves as a coordination point for substrate. Catalysis depends on H95, which acts as the Electrophile. The active-site Proton acceptor is E167. Residues G173, S212, and G233–G234 contribute to the substrate site.

This sequence belongs to the triosephosphate isomerase family. As to quaternary structure, homodimer.

The protein localises to the cytoplasm. It catalyses the reaction D-glyceraldehyde 3-phosphate = dihydroxyacetone phosphate. The protein operates within carbohydrate biosynthesis; gluconeogenesis. It participates in carbohydrate degradation; glycolysis; D-glyceraldehyde 3-phosphate from glycerone phosphate: step 1/1. Involved in the gluconeogenesis. Catalyzes stereospecifically the conversion of dihydroxyacetone phosphate (DHAP) to D-glyceraldehyde-3-phosphate (G3P). The sequence is that of Triosephosphate isomerase from Proteus mirabilis (strain HI4320).